Consider the following 162-residue polypeptide: Inner membrane protein YbjO (162 aa).

Residues 1–23 lie on the Periplasmic side of the membrane; sequence MEDETLGFFKKTSSSHARLNVPA. Residues 24–44 form a helical membrane-spanning segment; the sequence is LVQVAALAIIMIRGLDVLMIF. Topologically, residues 45–66 are cytoplasmic; it reads NTLGVRGIGEFIHRSVQTWSLT. A helical transmembrane segment spans residues 67–87; that stretch reads LVFLSSLVLVFIEIWCAFSLV. At 88 to 94 the chain is on the periplasmic side; sequence KGRRWAR. The chain crosses the membrane as a helical span at residues 95-115; the sequence is WLYLLTQITAASYLWAASLGY. Over 116 to 162 the chain is Cytoplasmic; it reads GYPELFSIPGESKREIFHSLMLQKLPDMLILMLLFVPSTSRRFFQLQ.

It is found in the cell inner membrane. This is Inner membrane protein YbjO (ybjO) from Escherichia coli O157:H7.